The primary structure comprises 289 residues: Minor capsid protein P10 (289 aa).

The segment at 1–21 (MMNFILVLLIVAMIGTILVSE) is hydrophobic.

In terms of assembly, interacts with the major capsid protein.

It localises to the virion. In terms of biological role, one of the minor capsid proteins that constitute a network internal to the major capsid proteins and outside the lipid membrane. The minor capsid proteins glue and stabilize the capsomers. This is Minor capsid protein P10 from Chlorella (PBCV-1).